Here is a 423-residue protein sequence, read N- to C-terminus: Calcium up-regulated protein A (423 aa).

Residues 1-19 (MINIEDISKSSNESEEKQL) are compositionally biased toward basic and acidic residues. Residues 1-27 (MINIEDISKSSNESEEKQLKSTSTSSK) form a disordered region. Ricin B-type lectin domains follow at residues 27 to 147 (KPKY…WTTF) and 118 to 251 (QGNG…WGIN).

It belongs to the cup family.

The protein localises to the cytoplasm. The protein resides in the membrane. Functionally, may play an important role in stabilizing and/or regulating the cell membrane during Ca(2+) stress or certain stages of development. The sequence is that of Calcium up-regulated protein A (cupA) from Dictyostelium discoideum (Social amoeba).